Here is a 776-residue protein sequence, read N- to C-terminus: Bifunctional lysine-specific demethylase and histidyl-hydroxylase NO66 (776 aa).

Disordered stretches follow at residues 1-57, 87-126, and 165-288; these read MGKK…EPKF, EQNGGKKRRHREISPKMEAKKPKVESKSKDGVAAKKAHKH, and ILDE…DDEG. Composition is skewed to basic and acidic residues over residues 47 to 57 and 98 to 119; these read HYKEPSKEPKF and EISPKMEAKKPKVESKSKDGVA. Residues 166–204 show a composition bias toward acidic residues; it reads LDEEVEDEEIDEEEFEDEEEVEDEEGMDEDETEIDESEM. Residues 206–216 show a composition bias toward basic and acidic residues; that stretch reads VDPKDIERCIE. Acidic residues predominate over residues 217 to 288; sequence FEDVDDEDEM…EMDADSDDEG (72 aa). One can recognise a JmjC domain in the interval 425 to 569; that stretch reads QLVNPQTFDD…NLMEKVIPEA (145 aa). 3 residues coordinate Fe cation: H468, D470, and H535.

This sequence belongs to the ROX family. NO66 subfamily. It depends on Fe(2+) as a cofactor.

It is found in the nucleus. It catalyses the reaction N(6),N(6)-dimethyl-L-lysyl(36)-[histone H3] + 2 2-oxoglutarate + 2 O2 = L-lysyl(36)-[histone H3] + 2 formaldehyde + 2 succinate + 2 CO2. Its function is as follows. Oxygenase that can act as both a histone lysine demethylase and a ribosomal histidine hydroxylase. Specifically demethylates 'Lys-4' (H3K4me) and 'Lys-36' (H3K36me) of histone H3, thereby playing a central role in histone code. In Caenorhabditis briggsae, this protein is Bifunctional lysine-specific demethylase and histidyl-hydroxylase NO66 (jmjc-1).